A 229-amino-acid chain; its full sequence is uncharacterized protein (229 aa).

The 228-residue stretch at 2–229 (LTLNNISKSY…LDERGDISHA (228 aa)) folds into the ABC transporter domain. Position 38 to 45 (38 to 45 (GPSGSGKS)) interacts with ATP.

The protein belongs to the ABC transporter superfamily.

This is an uncharacterized protein from Bacillus subtilis (strain 168).